The following is a 166-amino-acid chain: Phosphopantetheine adenylyltransferase (166 aa).

Ser-11 provides a ligand contact to substrate. Residues 11–12 (SF) and His-19 each bind ATP. Residues Lys-43, Ala-76, and Arg-90 each coordinate substrate. ATP contacts are provided by residues 91-93 (GLR), Glu-101, and 126-132 (MQPISSS).

It belongs to the bacterial CoaD family. In terms of assembly, homohexamer. The cofactor is Mg(2+).

The protein localises to the cytoplasm. The enzyme catalyses (R)-4'-phosphopantetheine + ATP + H(+) = 3'-dephospho-CoA + diphosphate. Its pathway is cofactor biosynthesis; coenzyme A biosynthesis; CoA from (R)-pantothenate: step 4/5. Reversibly transfers an adenylyl group from ATP to 4'-phosphopantetheine, yielding dephospho-CoA (dPCoA) and pyrophosphate. The protein is Phosphopantetheine adenylyltransferase of Streptococcus uberis (strain ATCC BAA-854 / 0140J).